A 444-amino-acid polypeptide reads, in one-letter code: ATP-dependent protease ATPase subunit HslU (444 aa).

Residues Ile18 and 60-65 (GVGKTE) each bind ATP. The disordered stretch occupies residues 141-161 (DAWGNNEEGDNDSGTRQSFRK). Positions 257, 322, and 394 each coordinate ATP.

The protein belongs to the ClpX chaperone family. HslU subfamily. In terms of assembly, a double ring-shaped homohexamer of HslV is capped on each side by a ring-shaped HslU homohexamer. The assembly of the HslU/HslV complex is dependent on binding of ATP.

The protein resides in the cytoplasm. ATPase subunit of a proteasome-like degradation complex; this subunit has chaperone activity. The binding of ATP and its subsequent hydrolysis by HslU are essential for unfolding of protein substrates subsequently hydrolyzed by HslV. HslU recognizes the N-terminal part of its protein substrates and unfolds these before they are guided to HslV for hydrolysis. In Aliivibrio fischeri (strain MJ11) (Vibrio fischeri), this protein is ATP-dependent protease ATPase subunit HslU.